We begin with the raw amino-acid sequence, 485 residues long: MHYYLGIDCGGTFIKAAIFDQNGTLQSIARRNIPIISEKPGYAERDMDELWNLCAQVIQKTIRQSSILPQQIKAIGISAQGKGAFFLDKDNKPLGRAILSSDQRAYEIVQCWQKENILQKFYPITLQTLWMGHPVSILRWIKENEPSRYEQIHTILMSHDYLRFCLTEKLYCEETNISESNFYNMREGKYDIQLAKLFGITECIDKLPPIIKSNKIAGYVTSRAAEQSGLVEGIPVVGGLFDVVSTALCADLKDDQHLNVVLGTWSVVSGVTHYIDDNQTIPFVYGKYPEKNKFIIHEASPTSAGNLEWFVNQFNLPNYDDINHEIAKLKPASSSVLFAPFLYGSNAKLGMQAGFYGIQSHHTQIHLLQAIYEGVIFSLMSHLERMQVRFPNASTVRVTGGPAKSEVWMQMLADISGMRLEIPNIEETGCLGAALMAMQAESAVEISQILNIDRKIFLPDKNQYSKYQHKYHRYLKFIEALKNLD.

The protein belongs to the FGGY kinase family. Homodimer.

The enzyme catalyses L-xylulose + ATP = L-xylulose 5-phosphate + ADP + H(+). The sequence is that of Probable L-xylulose kinase (lyx) from Haemophilus influenzae (strain ATCC 51907 / DSM 11121 / KW20 / Rd).